The following is a 270-amino-acid chain: Acyl-[acyl-carrier-protein]--UDP-N-acetylglucosamine O-acyltransferase (270 aa).

Belongs to the transferase hexapeptide repeat family. LpxA subfamily. In terms of assembly, homotrimer.

The protein localises to the cytoplasm. The enzyme catalyses a (3R)-hydroxyacyl-[ACP] + UDP-N-acetyl-alpha-D-glucosamine = a UDP-3-O-[(3R)-3-hydroxyacyl]-N-acetyl-alpha-D-glucosamine + holo-[ACP]. It participates in glycolipid biosynthesis; lipid IV(A) biosynthesis; lipid IV(A) from (3R)-3-hydroxytetradecanoyl-[acyl-carrier-protein] and UDP-N-acetyl-alpha-D-glucosamine: step 1/6. Functionally, involved in the biosynthesis of lipid A, a phosphorylated glycolipid that anchors the lipopolysaccharide to the outer membrane of the cell. This is Acyl-[acyl-carrier-protein]--UDP-N-acetylglucosamine O-acyltransferase from Sinorhizobium fredii (strain NBRC 101917 / NGR234).